Here is a 550-residue protein sequence, read N- to C-terminus: Efflux pump DEP3 (550 aa).

Residues 1-33 are disordered; it reads MSEQSTLAGPYTEKPGVESQNPTGDGKASFDET. The next 11 membrane-spanning stretches (helical) occupy residues 44–64, 78–98, 109–129, 139–159, 172–192, 199–219, 242–262, 268–288, 319–339, 351–371, and 373–393; these read AIAY…NTIV, LELI…ILLW, WVYI…GAAP, VIAG…VSVL, STVV…AFAA, WGFY…MILF, AVIF…GGVV, GTII…IVLL, FLAS…FQFI, LLPL…LMPK, and GLIP…SALM. N-linked (GlcNAc...) asparagine glycosylation occurs at Asn-399. 3 helical membrane passes run 410–430, 439–459, and 515–535; these read ILVG…VQSL, AVGA…AICG, and SIWA…WPLF.

The protein belongs to the major facilitator superfamily. TCR/Tet family.

Its subcellular location is the cell membrane. In terms of biological role, efflux pump; part of the gene cluster that mediates the biosynthesis of depudecin, a highly oxidized eleven-carbon linear polyketide that acts as a histone deacetylase (HDAC) inhibitor and makes a small contribution to pathogenesis. Is presumed either to be responsible for exporting depudecin, to provide self-protection, or both. The protein is Efflux pump DEP3 of Fusarium langsethiae.